The sequence spans 375 residues: Alcohol dehydrogenase E chain (375 aa).

Serine 2 carries the N-acetylserine modification. Residues cysteine 47, serine 49, histidine 68, cysteine 98, cysteine 101, cysteine 104, cysteine 112, and cysteine 175 each contribute to the Zn(2+) site. Residues serine 49 and histidine 68 each contribute to the an alcohol site. Serine 49 provides a ligand contact to NAD(+). NAD(+) contacts are provided by residues 200-205 (GLGGVG), aspartate 224, lysine 229, valine 293, 293-295 (VGV), phenylalanine 320, and arginine 370.

It belongs to the zinc-containing alcohol dehydrogenase family. Class-I subfamily. Dimer of identical or non-identical chains of two types (E and S) coded by 2 separate genes at different loci. Zn(2+) is required as a cofactor.

It is found in the cytoplasm. The enzyme catalyses a primary alcohol + NAD(+) = an aldehyde + NADH + H(+). The catalysed reaction is a secondary alcohol + NAD(+) = a ketone + NADH + H(+). This chain is Alcohol dehydrogenase E chain, found in Equus caballus (Horse).